The chain runs to 302 residues: MFPHKKNDPLKSLPISRVGSSQRLNQHISSIPSTPNYVASSLNPVRNLPVSSGSIKSKITTKAALDKFEQLPIVKQVGAFEDTLNAISDNISQFKEGQLHANVEKIIAINDDLKSKIEELDRHRRLGENIKELEAESSNLDNTSKYILKELISYRNELRALPRLPASASKGSGDTVEIEDILKYAMKLAKFTKAPATSASMPFQIHPNNYVWPAEDALRRGMLAASSLNPDEIIANELGTTEEEKIQEKKDEQVKKADKQQDTGIRRGSFGDYGSSSSGKKKEEQSAQLDLDLFDSEDEFSD.

Residues 98–145 (QLHANVEKIIAINDDLKSKIEELDRHRRLGENIKELEAESSNLDNTSK) are a coiled coil. The tract at residues 239–302 (GTTEEEKIQE…LFDSEDEFSD (64 aa)) is disordered. A compositionally biased stretch (basic and acidic residues) spans 242–265 (EEEKIQEKKDEQVKKADKQQDTGI). Positions 268–278 (GSFGDYGSSSS) are enriched in low complexity. The span at 292–302 (DLFDSEDEFSD) shows a compositional bias: acidic residues.

Belongs to the Mediator complex subunit 4 family. In terms of assembly, component of the Mediator complex.

Its subcellular location is the nucleus. In terms of biological role, component of the Mediator complex, a coactivator involved in the regulated transcription of nearly all RNA polymerase II-dependent genes. Mediator functions as a bridge to convey information from gene-specific regulatory proteins to the basal RNA polymerase II transcription machinery. Mediator is recruited to promoters by direct interactions with regulatory proteins and serves as a scaffold for the assembly of a functional preinitiation complex with RNA polymerase II and the general transcription factors. The protein is Mediator of RNA polymerase II transcription subunit 4 (MED4) of Scheffersomyces stipitis (strain ATCC 58785 / CBS 6054 / NBRC 10063 / NRRL Y-11545) (Yeast).